The sequence spans 540 residues: Acetyl-coenzyme A carboxylase carboxyl transferase subunit beta, chloroplastic (540 aa).

The disordered stretch occupies residues 229–249; it reads YSDNGSSSIRTRTSTSSGSSY. Positions 233–248 are enriched in low complexity; the sequence is GSSSIRTRTSTSSGSS. In terms of domain architecture, CoA carboxyltransferase N-terminal spans 267 to 538; it reads LWVQCENCYA…TFHPLKSNKV (272 aa). The Zn(2+) site is built by C271, C274, C290, and C293. A C4-type zinc finger spans residues 271–293; that stretch reads CENCYALNYNKLFRSKMNVCEQC.

This sequence belongs to the AccD/PCCB family. As to quaternary structure, acetyl-CoA carboxylase is a heterohexamer composed of biotin carboxyl carrier protein, biotin carboxylase and 2 subunits each of ACCase subunit alpha and ACCase plastid-coded subunit beta (accD). It depends on Zn(2+) as a cofactor.

Its subcellular location is the plastid. The protein resides in the chloroplast stroma. It carries out the reaction N(6)-carboxybiotinyl-L-lysyl-[protein] + acetyl-CoA = N(6)-biotinyl-L-lysyl-[protein] + malonyl-CoA. It functions in the pathway lipid metabolism; malonyl-CoA biosynthesis; malonyl-CoA from acetyl-CoA: step 1/1. Functionally, component of the acetyl coenzyme A carboxylase (ACC) complex. Biotin carboxylase (BC) catalyzes the carboxylation of biotin on its carrier protein (BCCP) and then the CO(2) group is transferred by the transcarboxylase to acetyl-CoA to form malonyl-CoA. The protein is Acetyl-coenzyme A carboxylase carboxyl transferase subunit beta, chloroplastic of Amborella trichopoda.